The sequence spans 1173 residues: DNA polymerase catalytic subunit (1173 aa).

2 disordered regions span residues 554–625 (PSLP…SASG) and 1123–1144 (EGPG…PPRK). Positions 564 to 578 (GGDGAGLEGGDGGTA) are enriched in gly residues. Residues 591 to 606 (DGEDEDDPEGGDEGEN) are compositionally biased toward acidic residues. Positions 607 to 618 (GECRENGLEKEG) are enriched in basic and acidic residues. A compositionally biased stretch (gly residues) spans 1123 to 1138 (EGPGRGEGLGVGGGEG).

The protein belongs to the DNA polymerase type-B family.

Its subcellular location is the host nucleus. It carries out the reaction DNA(n) + a 2'-deoxyribonucleoside 5'-triphosphate = DNA(n+1) + diphosphate. The polypeptide is DNA polymerase catalytic subunit (UL54) (Rattus).